We begin with the raw amino-acid sequence, 502 residues long: Packaging protein 1 (502 aa).

The segment at E99–S122 is disordered. An ATP-binding site is contributed by G226–S233. Residues R495–K502 are DNA-binding.

This sequence belongs to the adenoviridae packaging protein 1 family. Homodimer. Part of a genome packaging complex composed of packaging proteins 1, 2 and 3; this complex specifically binds to the packaging sequence on the left end of viral genomic DNA and performs packaging of the viral genome. Interacts with protein 33K.

It is found in the virion. The protein resides in the host nucleus. The protein localises to the host nucleoplasm. Its subcellular location is the host nucleolus. In terms of biological role, component of the packaging machinery which encapsidates the viral DNA into preformed capsids and transcriptional activator of the viral major late promoter (MLP). Binds, along with packaging proteins 2 and 3, to the specific packaging sequence on the left end of viral genomic DNA and displays ATPase activity thereby providing the power stroke of the packaging machinery. The activity of packaging protein IVa2 is stimulated by protein 33K which acts as a terminase. May be the protein that pumps DNA into the capsid powered by ATP hydrolysis. Specifically binds to the 5'-CG-3' nucleotides of the repeats making up the packaging sequence. Component of the DEF-A and DEF-B transcription factors that bind downstream elements of the major late promoter (MLP), and stimulate transcription from the MLP after initiation of viral DNA replication. DEF-A is a heterodimer packaging proteins 1 and 2 and DEF-B is a homodimer of packaging protein 1. This chain is Packaging protein 1, found in Canis lupus familiaris (Dog).